The following is a 95-amino-acid chain: MSFRPLHDRVLVRRVEAEEKTAGGIIIPDSAKEKPQEGEVVAVGGGSKAEDGKVTPLDVKAGDKILFGKWSGTEVKINGEDLLIMKESDILGIVG.

The protein belongs to the GroES chaperonin family. As to quaternary structure, heptamer of 7 subunits arranged in a ring. Interacts with the chaperonin GroEL.

The protein localises to the cytoplasm. Its function is as follows. Together with the chaperonin GroEL, plays an essential role in assisting protein folding. The GroEL-GroES system forms a nano-cage that allows encapsulation of the non-native substrate proteins and provides a physical environment optimized to promote and accelerate protein folding. GroES binds to the apical surface of the GroEL ring, thereby capping the opening of the GroEL channel. The polypeptide is Co-chaperonin GroES (Rhizorhabdus wittichii (strain DSM 6014 / CCUG 31198 / JCM 15750 / NBRC 105917 / EY 4224 / RW1) (Sphingomonas wittichii)).